The sequence spans 323 residues: tRNA U34 carboxymethyltransferase (323 aa).

Carboxy-S-adenosyl-L-methionine-binding positions include K91, W105, K110, G130, 152–154, 181–182, M196, Y200, and R315; these read DPS and IE.

It belongs to the class I-like SAM-binding methyltransferase superfamily. CmoB family. In terms of assembly, homotetramer.

The catalysed reaction is carboxy-S-adenosyl-L-methionine + 5-hydroxyuridine(34) in tRNA = 5-carboxymethoxyuridine(34) in tRNA + S-adenosyl-L-homocysteine + H(+). Its function is as follows. Catalyzes carboxymethyl transfer from carboxy-S-adenosyl-L-methionine (Cx-SAM) to 5-hydroxyuridine (ho5U) to form 5-carboxymethoxyuridine (cmo5U) at position 34 in tRNAs. The polypeptide is tRNA U34 carboxymethyltransferase (Vibrio atlanticus (strain LGP32) (Vibrio splendidus (strain Mel32))).